The following is a 580-amino-acid chain: Proline--tRNA ligase (580 aa).

Belongs to the class-II aminoacyl-tRNA synthetase family. ProS type 1 subfamily. In terms of assembly, homodimer.

It is found in the cytoplasm. It catalyses the reaction tRNA(Pro) + L-proline + ATP = L-prolyl-tRNA(Pro) + AMP + diphosphate. Catalyzes the attachment of proline to tRNA(Pro) in a two-step reaction: proline is first activated by ATP to form Pro-AMP and then transferred to the acceptor end of tRNA(Pro). As ProRS can inadvertently accommodate and process non-cognate amino acids such as alanine and cysteine, to avoid such errors it has two additional distinct editing activities against alanine. One activity is designated as 'pretransfer' editing and involves the tRNA(Pro)-independent hydrolysis of activated Ala-AMP. The other activity is designated 'posttransfer' editing and involves deacylation of mischarged Ala-tRNA(Pro). The misacylated Cys-tRNA(Pro) is not edited by ProRS. This is Proline--tRNA ligase from Polynucleobacter necessarius subsp. necessarius (strain STIR1).